Reading from the N-terminus, the 79-residue chain is Hematopoietic cell signal transducer (79 aa).

The N-terminal stretch at 1–18 (MAPPGGILFLLLLPVAAA) is a signal peptide. Residues 19 to 35 (QVTSGSCSGCGPLSLPL) lie on the Extracellular side of the membrane. The helical transmembrane segment at 36–56 (LAGLVAADAVVSLLIVVGVFV) threads the bilayer. Residues 57–79 (CGRPRSRPTQEDGKIYINMPGRG) are Cytoplasmic-facing. Phosphotyrosine is present on tyrosine 72. The interval 72-74 (YIN) is GRB2 binding site. A PIK3R1 binding site region spans residues 72–75 (YINM).

The protein belongs to the DAP10 family. Homodimer; Disulfide-linked. Heterohexamer composed of four subunits of HCST/DAP10 and two subunits of KLRK1. Interacts (via transmembrane domain) with KLRK1 (via transmembrane domain); the interaction is required for KLRK1 NK cell surface and induces NK cell-mediated cytotoxicity. Interacts with PIK3R1 and GRB2. Interacts with CLEC5A. Forms an CLEC5A/TYROBP/HCST trimolecular complex depending almost solely on TYROBP. Interacts with KLRK1. Interacts with CD300H. Phosphorylated; PIK3R1 and GRB2 associate specifically with tyrosine-phosphorylated HCST. In terms of processing, O-glycosylated. In terms of tissue distribution, expressed predominantly in lymphohematopoietic tissues.

The protein localises to the membrane. Its function is as follows. Transmembrane adapter protein which associates with KLRK1 to form an activation receptor KLRK1-HCST in lymphoid and myeloid cells; this receptor plays a major role in triggering cytotoxicity against target cells expressing cell surface ligands such as MHC class I chain-related MICA and MICB, and UL16-binding proteins (ULBPs); these ligands are up-regulated by stress conditions and pathological state such as viral infection and tumor transformation. Functions as a docking site for PI3-kinase PIK3R1 and GRB2. Interaction of ULBPs with KLRK1-HCST triggers calcium mobilization and activation of the PIK3R1, MAP2K/ERK, and JAK2/STAT5 signaling pathways. Both PIK3R1 and GRB2 are required for full KLRK1-HCST-mediated activation and ultimate killing of target cells. In NK cells, KLRK1-HCST signaling directly induces cytotoxicity and enhances cytokine production initiated via DAP12/TYROBP-associated receptors. In T-cells, it provides primarily costimulation for TCR-induced signals. KLRK1-HCST receptor plays a role in immune surveillance against tumors and is required for cytolysis of tumors cells; indeed, melanoma cells that do not express KLRK1 ligands escape from immune surveillance mediated by NK cells. This is Hematopoietic cell signal transducer (HCST) from Sus scrofa (Pig).